A 37-amino-acid chain; its full sequence is Large ribosomal subunit protein bL36 (37 aa).

The protein belongs to the bacterial ribosomal protein bL36 family.

This is Large ribosomal subunit protein bL36 from Treponema pallidum (strain Nichols).